Here is an 89-residue protein sequence, read N- to C-terminus: Barrier-to-autointegration factor 1 (89 aa).

It belongs to the BAF family. In terms of assembly, interacts with emr-1 and lem-2. Interacts with lem-4l, leading to decreased phosphorylation by VRK1 and promoting dephosphorylation by protein phosphatase 2A (PP2A). Post-translationally, phosphorylated by vrk-1. Phosphorylation by vrk-1 in mitosis is essential to achieve correct timing of recruitment of nuclear envelope components during nuclear envelope assembly. Dephosphorylated by protein phosphatase 2A (PP2A) following interaction with lem-4l during mitotic exit, leading to mitotic nuclear envelope reassembly.

Its subcellular location is the nucleus. In terms of biological role, DNA-binding protein which plays an essential role in nuclear envelope formation. Required for normal chromosome segregation during mitosis. Associates with the nuclear lamina via its interaction with LEM domain containing proteins emr-1 and lem-2. In association with lem-3, plays a role in radiation-induced DNA damage repair response. The protein is Barrier-to-autointegration factor 1 (baf-1) of Caenorhabditis elegans.